Reading from the N-terminus, the 509-residue chain is MDPSSAGAGGNSLASASCGDAQKRRVCYFYDPEVGNYYYGQGHPMKPHRVRMTHALLAHYGLLAPAKMQVLRPLPARDRDLCRFHSDDYVAFLRAVTPETQFDQIRSLRRFNVGEDCPVFDGLYAYCQTYAGASVGAAVKLNHGTHDIAINWSGGLHHAKKSEASGFCYVNDIVLAILELLKLHERVLYIDIDIHHGDGVEEAFYTTNRVMTVSFHKFGDYFPGTGDIRDIGYSEGKYYCLNVPLDDGIDDDSYQSIFKPIISKVMEMYRPGAVVLQCGADSLSGDRLGCFNLSGKGHAECVKFMRSFNVPLLLLGGGGYTIRNVARCWCYETGVALGEELREKLPYNEYYEYFGPEYSLYVAASNMENRNTNKQLEEIKCNILDNLSKLQHAPSVQFEERIPETKLPEPDEDQDDPDERHDPDSDMLLDDHKPMGHSARSLIHNIGVKREITETETKDQHGKRLTTEHKVPEPMADDLGSSKQVPTADANSMAINAPGNAKNEPGSSL.

The histone deacetylase stretch occupies residues 24–338; that stretch reads RRVCYFYDPE…WCYETGVALG (315 aa). Catalysis depends on H158, which acts as the Proton donor/acceptor. Zn(2+)-binding residues include D193, H195, and D281. The tract at residues 394-509 is disordered; that stretch reads PSVQFEERIP…NAKNEPGSSL (116 aa). Composition is skewed to basic and acidic residues over residues 398–409, 418–434, and 448–472; these read FEERIPETKLPE, DERHDPDSDMLLDDHKP, and VKREITETETKDQHGKRLTTEHKVP. Positions 481–494 are enriched in polar residues; that stretch reads SSKQVPTADANSMA.

This sequence belongs to the histone deacetylase family. HD Type 1 subfamily. The cofactor is Zn(2+). In terms of tissue distribution, expressed in roots.

It localises to the nucleus. It carries out the reaction N(6)-acetyl-L-lysyl-[histone] + H2O = L-lysyl-[histone] + acetate. Functionally, responsible for the deacetylation of lysine residues on the N-terminal part of the core histones (H2A, H2B, H3 and H4). Histone deacetylation gives a tag for epigenetic repression and plays an important role in transcriptional regulation, cell cycle progression and developmental events. Histone deacetylases act via the formation of large multiprotein complexes. The sequence is that of Histone deacetylase 2 from Oryza sativa subsp. japonica (Rice).